The following is a 353-amino-acid chain: Melatonin receptor type 1A (353 aa).

Positions 1–15 (MKGNGSTLLNASQQA) are enriched in polar residues. Residues 1–23 (MKGNGSTLLNASQQAPGVGEGGG) form a disordered region. Topologically, residues 1–32 (MKGNGSTLLNASQQAPGVGEGGGPRPSWLAST) are extracellular. N-linked (GlcNAc...) asparagine glycosylation is found at Asn4 and Asn10. Residues 33–53 (LAFILIFTIVVDILGNLLVIL) traverse the membrane as a helical segment. Topologically, residues 54 to 66 (SVYRNKKLRNAGN) are cytoplasmic. The helical transmembrane segment at 67–87 (IFVVSLAIADLVVAIYPYPLV) threads the bilayer. The Extracellular portion of the chain corresponds to 88–105 (LTSIFNNGWNLGYLHCQI). The cysteines at positions 103 and 180 are disulfide-linked. Residues 106-126 (SAFLMGLSVIGSIFNITGIAI) form a helical membrane-spanning segment. At 127–147 (NRYCYICHSLKYDRLYSNKNS) the chain is on the cytoplasmic side. Residues 148–168 (LCYVFLIWVLTLVAIMPNLQT) form a helical membrane-spanning segment. The Extracellular segment spans residues 169 to 190 (GTLQYDPRIYSCTFTQSVSSAY). The chain crosses the membrane as a helical span at residues 191–211 (TIAVVVFHFIVPMIIVIFCYL). Topologically, residues 212–243 (RIWILVLQVRRRVKPDSKPRLKPQDFRNFVTM) are cytoplasmic. A helical membrane pass occupies residues 244–264 (FVVFVLFAICWAPLNFIGLIV). The Extracellular segment spans residues 265–277 (ASDPATMAPRIPE). A helical transmembrane segment spans residues 278-298 (WLFVASYYMAYFNSCLNAIIY). The Cytoplasmic segment spans residues 299 to 353 (GLLNQNFRQEYKRILVSLFTAKMCFVDSSNDPADKIKCKPAPLIANNNLIKVDSV).

Belongs to the G-protein coupled receptor 1 family. In terms of tissue distribution, at least in the brain, more precisely in the pars tuberalis and the suprachiasmatic nucleus.

Its subcellular location is the cell membrane. Its function is as follows. High affinity receptor for melatonin. Likely to mediate the reproductive and circadian actions of melatonin. The activity of this receptor is mediated by pertussis toxin sensitive G proteins that inhibit adenylate cyclase activity. Possibly involved in sleep induction, by melatonin activation of the potassium channel KCNMA1/BK and the dissociation of G-beta and G-gamma subunits, thereby decreasing synaptic transmission. The protein is Melatonin receptor type 1A (MTNR1A) of Phodopus sungorus (Striped hairy-footed hamster).